The chain runs to 101 residues: MAKKALVVKDERKRALACRSREKRSAVRNMRNDKTISLKERVAIQAKLNSLPRNSSPARSKNRCSITGRPRGYYRKFGISRIQLRVLANWGKLPGVVKSSW.

The protein belongs to the universal ribosomal protein uS14 family. Part of the 30S ribosomal subunit. Contacts proteins S3 and S10.

Binds 16S rRNA, required for the assembly of 30S particles and may also be responsible for determining the conformation of the 16S rRNA at the A site. The protein is Small ribosomal subunit protein uS14 of Neorickettsia sennetsu (strain ATCC VR-367 / Miyayama) (Ehrlichia sennetsu).